A 262-amino-acid polypeptide reads, in one-letter code: Tryptophan synthase alpha chain (262 aa).

Catalysis depends on proton acceptor residues Glu48 and Asp59.

Belongs to the TrpA family. Tetramer of two alpha and two beta chains.

It catalyses the reaction (1S,2R)-1-C-(indol-3-yl)glycerol 3-phosphate + L-serine = D-glyceraldehyde 3-phosphate + L-tryptophan + H2O. It participates in amino-acid biosynthesis; L-tryptophan biosynthesis; L-tryptophan from chorismate: step 5/5. In terms of biological role, the alpha subunit is responsible for the aldol cleavage of indoleglycerol phosphate to indole and glyceraldehyde 3-phosphate. This Helicobacter pylori (strain ATCC 700392 / 26695) (Campylobacter pylori) protein is Tryptophan synthase alpha chain.